Here is a 177-residue protein sequence, read N- to C-terminus: Transcription termination/antitermination protein NusG (177 aa).

The 31-residue stretch at 126–156 (PGETVRVIDGPFADFNGVVEEVNYEKSRIQV) folds into the KOW domain.

This sequence belongs to the NusG family.

Functionally, participates in transcription elongation, termination and antitermination. The protein is Transcription termination/antitermination protein NusG of Pseudomonas aeruginosa (strain ATCC 15692 / DSM 22644 / CIP 104116 / JCM 14847 / LMG 12228 / 1C / PRS 101 / PAO1).